Reading from the N-terminus, the 265-residue chain is uncharacterized protein (265 aa).

A disordered region spans residues 122–145 (THYRDNGQTPPRDTRPHGGISLGG).

This is an uncharacterized protein from Zymomonas mobilis subsp. mobilis (strain ATCC 31821 / ZM4 / CP4).